The chain runs to 254 residues: Mannose-binding protein (254 aa).

The signal sequence occupies residues 1-19; the sequence is MTLLQPFSALLLCLSLMMA. Residues 46–99 form a disordered region; sequence NGLPGRDGRDGPKGEKGDPGEGLRGLQGLPGKAGPQGLKGEVGPQGEKGQKGER. Residues 51-66 are compositionally biased toward basic and acidic residues; the sequence is RDGRDGPKGEKGDPGE. The residue at position 57 (P57) is a 4-hydroxyproline. K58 and K61 each carry 5-hydroxylysine. O-linked (Gal...) hydroxylysine glycans are attached at residues K58 and K61. The residue at position 75 (P75) is a 4-hydroxyproline. 2 positions are modified to 5-hydroxylysine: K93 and K96. Residues 140–250 enclose the C-type lectin domain; sequence VGKKMFVSTG…LDCSNSNIFI (111 aa). Disulfide bonds link C161-C252 and C229-C243.

Oligomeric complex of 3 or more homotrimers.

It localises to the secreted. Its function is as follows. Calcium-dependent lectin involved in innate immune defense. Binds mannose, fucose and N-acetylglucosamine on different microorganisms and activates the lectin complement pathway. The sequence is that of Mannose-binding protein from Gallus gallus (Chicken).